The primary structure comprises 106 residues: Small ribosomal subunit protein uS10 (106 aa).

Belongs to the universal ribosomal protein uS10 family. In terms of assembly, part of the 30S ribosomal subunit.

Involved in the binding of tRNA to the ribosomes. This Mycoplasma genitalium (strain ATCC 33530 / DSM 19775 / NCTC 10195 / G37) (Mycoplasmoides genitalium) protein is Small ribosomal subunit protein uS10.